Here is a 295-residue protein sequence, read N- to C-terminus: G1/S-specific cyclin-D1 (295 aa).

The 125-residue stretch at 28–152 (LRAMLKTEET…LLVNKLKWNL (125 aa)) folds into the Cyclin N-terminal domain. A disordered region spans residues 262–283 (AQQNVDPKATEEEGEVEEEAGL). Lys269 participates in a covalent cross-link: Glycyl lysine isopeptide (Lys-Gly) (interchain with G-Cter in ubiquitin). At Thr286 the chain carries Phosphothreonine.

Belongs to the cyclin family. Cyclin D subfamily. In terms of assembly, interacts with either CDK4 or CDK6 protein kinase to form a serine/threonine kinase holoenzyme complex. The cyclin subunit imparts substrate specificity to the complex. Component of the ternary complex CCND1/CDK4/CDKN1B required for nuclear translocation and modulation of CDK4-mediated kinase activity. Interacts directly with CDKN1B. Can form similar complexes with either CDKN1A or CDKN2A. Interacts with UHRF2; the interaction ubiquitinates CCND1 and appears to occur independently of phosphorylation. Interacts with USP2. Interacts (via cyclin N-terminal domain) with INSM1 (via N-terminal region); the interaction competes with the binding of CCND1 to CDK4 during cell cycle progression and inhibits CDK4 activity. Interacts with CDK4; the interaction is prevented with the binding of CCND1 to INSM1 during cell cycle progression. Post-translationally, phosphorylation at Thr-286 by MAP kinases is required for ubiquitination and degradation by the DCX(AMBRA1) complex. It also plays an essential role for recognition by the FBXO31 component of SCF (SKP1-cullin-F-box) protein ligase complex following DNA damage. In terms of processing, ubiquitinated at Lys-269 by the DCX(AMBRA1) complex during the transition from G1 to S cell phase, leading to its degradation: ubiquitination is dependent on Thr-286 phosphorylation. The DCX(AMBRA1) complex represents the major regulator of CCND1 stability during the G1/S transition. Also ubiquitinated by the SCF(FBXO4) and Cul7-RING(FBXW8) ubiquitin-protein ligase complexes. Following DNA damage it is ubiquitinated by the SCF(FBXO31) protein ligase complex. SCF(FBXO31) ubiquitination is dependent on Thr-286 phosphorylation. Ubiquitinated also by UHRF2 apparently in a phosphorylation-independent manner. Ubiquitination leads to its degradation and G1 arrest. Deubiquitinated by USP2; leading to its stabilization. Expressed in the intestinal epithelium.

It is found in the nucleus. The protein localises to the cytoplasm. Its subcellular location is the nucleus membrane. Regulatory component of the cyclin D1-CDK4 (DC) complex that phosphorylates and inhibits members of the retinoblastoma (RB) protein family including RB1 and regulates the cell-cycle during G(1)/S transition. Phosphorylation of RB1 allows dissociation of the transcription factor E2F from the RB/E2F complex and the subsequent transcription of E2F target genes which are responsible for the progression through the G(1) phase. Hypophosphorylates RB1 in early G(1) phase. Cyclin D-CDK4 complexes are major integrators of various mitogenenic and antimitogenic signals. Also a substrate for SMAD3, phosphorylating SMAD3 in a cell-cycle-dependent manner and repressing its transcriptional activity. Component of the ternary complex, cyclin D1/CDK4/CDKN1B, required for nuclear translocation and activity of the cyclin D-CDK4 complex. Exhibits transcriptional corepressor activity with INSM1 on the NEUROD1 and INS promoters in a cell cycle-independent manner. This chain is G1/S-specific cyclin-D1 (Ccnd1), found in Mus musculus (Mouse).